Reading from the N-terminus, the 488-residue chain is Zinc metalloproteinase-disintegrin agkistin (488 aa).

An N-terminal signal peptide occupies residues 1–20 (MIQVLLVTICLAVFPYQGSS). Residues 21–195 (IILESGNVND…NFPPDGRIEF (175 aa)) constitute a propeptide that is removed on maturation. Residues 198 to 394 (RYIELVIVAD…NPLASYCLYN (197 aa)) form the Peptidase M12B domain. Position 201 (Glu201) interacts with Ca(2+). Asn258 carries an N-linked (GlcNAc...) asparagine glycan. Asp285 lines the Ca(2+) pocket. 3 disulfide bridges follow: Cys309–Cys391, Cys349–Cys373, and Cys351–Cys356. His334 is a binding site for Zn(2+). Glu335 is an active-site residue. 2 residues coordinate Zn(2+): His338 and His344. Positions 391, 394, 406, 409, 413, 416, and 419 each coordinate Ca(2+). In terms of domain architecture, Disintegrin spans 404–488 (PPVCGNYYLE…AGCPRNPSHA (85 aa)). Cystine bridges form between Cys407/Cys426, Cys418/Cys436, Cys420/Cys431, Cys430/Cys453, Cys444/Cys450, Cys449/Cys474, and Cys462/Cys481. A Cell attachment site motif is present at residues 466 to 468 (RGD).

Belongs to the venom metalloproteinase (M12B) family. P-II subfamily. P-IIb sub-subfamily. As to quaternary structure, monomer. Zn(2+) is required as a cofactor. Expressed by the venom gland.

It is found in the secreted. Functionally, inhibits ADP-induced human platelet aggregation, inhibits bovine aortic endothelial cells (BAEC) migration, has anti-angiogenic activity and induces BAEC and human micro-vascular endothelial cell (HMEC) apoptosis. The metalloproteinase domain may act in hemorrhage. This is Zinc metalloproteinase-disintegrin agkistin from Gloydius halys (Chinese water mocassin).